Consider the following 235-residue polypeptide: MKLTWLGHAAFRIETAKAVILIDPFLNGNPGAKGIDFKEATKGVTHIALTHGHGDHVGDTVAIAREHGAIVIANADLASWLGSQGVEKLDPGNTGGTVTHDGFTITFVNALHSSAMLTENGVSQALGNPNGLVFHFEDAPTLYHMGDTDIFSDMGLINELHQPEIGIVPIGDRFTMGGAVAALACQRYFNFKTVLPCHYASFPIIDQTADKFLAGMADHRETKVIADPAGTVHSF.

It belongs to the UPF0173 family.

In Brucella anthropi (strain ATCC 49188 / DSM 6882 / CCUG 24695 / JCM 21032 / LMG 3331 / NBRC 15819 / NCTC 12168 / Alc 37) (Ochrobactrum anthropi), this protein is UPF0173 metal-dependent hydrolase Oant_3663.